Consider the following 54-residue polypeptide: UPF0391 membrane protein Pnap_0920 (54 aa).

Transmembrane regions (helical) follow at residues 6 to 26 and 30 to 50; these read VVFL…IAAG and IAKI…VVSL.

Belongs to the UPF0391 family.

It localises to the cell membrane. The sequence is that of UPF0391 membrane protein Pnap_0920 from Polaromonas naphthalenivorans (strain CJ2).